The primary structure comprises 467 residues: Cysteine--tRNA ligase (467 aa).

Cys-28 contributes to the Zn(2+) binding site. The 'HIGH' region signature appears at 30–40; it reads MTVYDYCHLGH. Positions 209, 234, and 238 each coordinate Zn(2+). A 'KMSKS' region motif is present at residues 266–270; the sequence is KMSKS. Lys-269 contributes to the ATP binding site.

The protein belongs to the class-I aminoacyl-tRNA synthetase family. In terms of assembly, monomer. It depends on Zn(2+) as a cofactor.

It is found in the cytoplasm. The catalysed reaction is tRNA(Cys) + L-cysteine + ATP = L-cysteinyl-tRNA(Cys) + AMP + diphosphate. The protein is Cysteine--tRNA ligase of Hahella chejuensis (strain KCTC 2396).